We begin with the raw amino-acid sequence, 138 residues long: Acidic phospholipase A2 jerdoxin (138 aa).

Residues Met-1–Gly-16 form the signal peptide. 7 disulfide bridges follow: Cys-42–Cys-131, Cys-44–Cys-60, Cys-59–Cys-111, Cys-65–Cys-138, Cys-66–Cys-104, Cys-73–Cys-97, and Cys-91–Cys-102. Residues Tyr-43, Gly-45, and Gly-47 each contribute to the Ca(2+) site. His-63 is an active-site residue. Asp-64 contributes to the Ca(2+) binding site. The active site involves Asp-105.

The protein belongs to the phospholipase A2 family. Group II subfamily. D49 sub-subfamily. Monomer. Ca(2+) is required as a cofactor. As to expression, expressed by the venom gland.

The protein resides in the secreted. The enzyme catalyses a 1,2-diacyl-sn-glycero-3-phosphocholine + H2O = a 1-acyl-sn-glycero-3-phosphocholine + a fatty acid + H(+). Functionally, snake venom phospholipase A2 (PLA2) that displays edema-inducing activities, exhibits indirect hemolytic activity, and inhibits ADP-induced platelet aggregation. PLA2 catalyzes the calcium-dependent hydrolysis of the 2-acyl groups in 3-sn-phosphoglycerides. In Protobothrops jerdonii (Jerdon's pitviper), this protein is Acidic phospholipase A2 jerdoxin.